Consider the following 121-residue polypeptide: Phosphoribosyl-ATP pyrophosphatase (121 aa).

This sequence belongs to the PRA-PH family.

Its subcellular location is the cytoplasm. It carries out the reaction 1-(5-phospho-beta-D-ribosyl)-ATP + H2O = 1-(5-phospho-beta-D-ribosyl)-5'-AMP + diphosphate + H(+). It participates in amino-acid biosynthesis; L-histidine biosynthesis; L-histidine from 5-phospho-alpha-D-ribose 1-diphosphate: step 2/9. In Burkholderia ambifaria (strain MC40-6), this protein is Phosphoribosyl-ATP pyrophosphatase.